The primary structure comprises 397 residues: Dual oxidase maturation factor 1 (397 aa).

2 consecutive transmembrane segments (helical) span residues 26-46 and 57-77; these read FVIF…LPGV and YVLM…PCWA. Residue Asn-109 is glycosylated (N-linked (GlcNAc...) asparagine). 3 helical membrane-spanning segments follow: residues 191 to 211, 218 to 238, and 261 to 281; these read AAIW…LFLP, ILAT…LSPC, and CFYL…GLGI. The interval 324 to 376 is disordered; sequence YGTNTTNSSRDKNDISSDKTAGSSGFQSRTSTCQSSASSASLRSQSSIETVHD. 2 N-linked (GlcNAc...) asparagine glycosylation sites follow: Asn-327 and Asn-330. A compositionally biased stretch (polar residues) spans 341 to 350; that stretch reads DKTAGSSGFQ. Over residues 351 to 370 the composition is skewed to low complexity; the sequence is SRTSTCQSSASSASLRSQSS.

Belongs to the DUOXA family. In terms of assembly, interacts with bli-3 and tsp-15. Interacts with csnk-1. In terms of tissue distribution, expressed in the hypodermis, specifically in seam cells, the terminal bulb of the pharynx, the distal region of the gonadal arm, vulva, spermatheca and uterus.

The protein localises to the membrane. Its function is as follows. Plays a role in cuticle biogenesis. In complex with tsp-15 and the dual oxidase bli-3, promotes the generation of reactive oxygen species (ROS) and tyrosine cross-linking of collagen, thus stabilizing cuticular extracellular matrix. The protein is Dual oxidase maturation factor 1 of Caenorhabditis elegans.